A 141-amino-acid polypeptide reads, in one-letter code: Large ribosomal subunit protein uL16 (141 aa).

The interval 1 to 21 (MLMPKRVKYRKQQRGHNRGMA) is disordered.

It belongs to the universal ribosomal protein uL16 family. In terms of assembly, part of the 50S ribosomal subunit.

Its function is as follows. Binds 23S rRNA and is also seen to make contacts with the A and possibly P site tRNAs. The protein is Large ribosomal subunit protein uL16 of Roseiflexus castenholzii (strain DSM 13941 / HLO8).